The primary structure comprises 148 residues: FAD synthase (148 aa).

Residues 11–12 (TF), 16–19 (HPGH), N94, and Y121 contribute to the ATP site.

This sequence belongs to the archaeal FAD synthase family. In terms of assembly, homodimer. The cofactor is a divalent metal cation.

It carries out the reaction FMN + ATP + H(+) = FAD + diphosphate. The protein operates within cofactor biosynthesis; FAD biosynthesis; FAD from FMN: step 1/1. Functionally, catalyzes the transfer of the AMP portion of ATP to flavin mononucleotide (FMN) to produce flavin adenine dinucleotide (FAD) coenzyme. This is FAD synthase from Methanoregula boonei (strain DSM 21154 / JCM 14090 / 6A8).